We begin with the raw amino-acid sequence, 323 residues long: Probable cell division protein WhiA (323 aa).

The H-T-H motif DNA-binding region spans 275–309 (TLKELGEMLTTGQVSKSGINHRLRKLDQIAERLRS).

It belongs to the WhiA family.

Involved in cell division and chromosome segregation. In Listeria welshimeri serovar 6b (strain ATCC 35897 / DSM 20650 / CCUG 15529 / CIP 8149 / NCTC 11857 / SLCC 5334 / V8), this protein is Probable cell division protein WhiA.